Here is a 342-residue protein sequence, read N- to C-terminus: Heat-inducible transcription repressor HrcA (342 aa).

The protein belongs to the HrcA family.

Functionally, negative regulator of class I heat shock genes (grpE-dnaK-dnaJ and groELS operons). Prevents heat-shock induction of these operons. This chain is Heat-inducible transcription repressor HrcA, found in Shouchella clausii (strain KSM-K16) (Alkalihalobacillus clausii).